The primary structure comprises 63 residues: Protein DsrB (63 aa).

This sequence belongs to the DsrB family.

The chain is Protein DsrB from Yersinia pseudotuberculosis serotype O:1b (strain IP 31758).